A 507-amino-acid chain; its full sequence is ATP synthase subunit alpha, chloroplastic (507 aa).

Residue 170 to 177 (GDRQTGKT) coordinates ATP.

The protein belongs to the ATPase alpha/beta chains family. As to quaternary structure, F-type ATPases have 2 components, CF(1) - the catalytic core - and CF(0) - the membrane proton channel. CF(1) has five subunits: alpha(3), beta(3), gamma(1), delta(1), epsilon(1). CF(0) has four main subunits: a, b, b' and c.

The protein localises to the plastid. It is found in the chloroplast thylakoid membrane. It carries out the reaction ATP + H2O + 4 H(+)(in) = ADP + phosphate + 5 H(+)(out). Its function is as follows. Produces ATP from ADP in the presence of a proton gradient across the membrane. The alpha chain is a regulatory subunit. The polypeptide is ATP synthase subunit alpha, chloroplastic (Ranunculus macranthus (Large buttercup)).